Consider the following 317-residue polypeptide: Lipoyl synthase (317 aa).

Positions 56, 61, 67, 82, 86, 89, and 298 each coordinate [4Fe-4S] cluster. A Radical SAM core domain is found at 68–287; sequence WEDREATFLI…KEEAEQIGFS (220 aa).

Belongs to the radical SAM superfamily. Lipoyl synthase family. The cofactor is [4Fe-4S] cluster.

The protein resides in the cytoplasm. The catalysed reaction is [[Fe-S] cluster scaffold protein carrying a second [4Fe-4S](2+) cluster] + N(6)-octanoyl-L-lysyl-[protein] + 2 oxidized [2Fe-2S]-[ferredoxin] + 2 S-adenosyl-L-methionine + 4 H(+) = [[Fe-S] cluster scaffold protein] + N(6)-[(R)-dihydrolipoyl]-L-lysyl-[protein] + 4 Fe(3+) + 2 hydrogen sulfide + 2 5'-deoxyadenosine + 2 L-methionine + 2 reduced [2Fe-2S]-[ferredoxin]. Its pathway is protein modification; protein lipoylation via endogenous pathway; protein N(6)-(lipoyl)lysine from octanoyl-[acyl-carrier-protein]: step 2/2. Its function is as follows. Catalyzes the radical-mediated insertion of two sulfur atoms into the C-6 and C-8 positions of the octanoyl moiety bound to the lipoyl domains of lipoate-dependent enzymes, thereby converting the octanoylated domains into lipoylated derivatives. The polypeptide is Lipoyl synthase (Streptomyces coelicolor (strain ATCC BAA-471 / A3(2) / M145)).